Reading from the N-terminus, the 283-residue chain is Polyamine aminopropyltransferase (283 aa).

Positions Asn-5 to Lys-241 constitute a PABS domain. Gln-35 is an S-methyl-5'-thioadenosine binding site. 2 residues coordinate spermidine: His-66 and Asp-90. Residues Asp-110 and Asp-141–Gly-142 contribute to the S-methyl-5'-thioadenosine site. Asp-160 functions as the Proton acceptor in the catalytic mechanism. Asp-160–Asp-163 lines the spermidine pocket. Pro-167 lines the S-methyl-5'-thioadenosine pocket.

The protein belongs to the spermidine/spermine synthase family. In terms of assembly, homodimer or homotetramer.

It is found in the cytoplasm. It carries out the reaction S-adenosyl 3-(methylsulfanyl)propylamine + putrescine = S-methyl-5'-thioadenosine + spermidine + H(+). Its pathway is amine and polyamine biosynthesis; spermidine biosynthesis; spermidine from putrescine: step 1/1. Functionally, catalyzes the irreversible transfer of a propylamine group from the amino donor S-adenosylmethioninamine (decarboxy-AdoMet) to putrescine (1,4-diaminobutane) to yield spermidine. The protein is Polyamine aminopropyltransferase of Stenotrophomonas maltophilia (strain K279a).